Reading from the N-terminus, the 316-residue chain is Methionyl-tRNA formyltransferase (316 aa).

(6S)-5,6,7,8-tetrahydrofolate is bound at residue 111 to 114 (GLLP).

This sequence belongs to the Fmt family.

It carries out the reaction L-methionyl-tRNA(fMet) + (6R)-10-formyltetrahydrofolate = N-formyl-L-methionyl-tRNA(fMet) + (6S)-5,6,7,8-tetrahydrofolate + H(+). Functionally, attaches a formyl group to the free amino group of methionyl-tRNA(fMet). The formyl group appears to play a dual role in the initiator identity of N-formylmethionyl-tRNA by promoting its recognition by IF2 and preventing the misappropriation of this tRNA by the elongation apparatus. In Chlamydia trachomatis serovar L2b (strain UCH-1/proctitis), this protein is Methionyl-tRNA formyltransferase.